The chain runs to 28 residues: Putative antitoxin AF_1079 (28 aa).

This sequence belongs to the UPF0165 family.

In terms of biological role, possibly the antitoxin component of a type II toxin-antitoxin (TA) system. The polypeptide is Putative antitoxin AF_1079 (Archaeoglobus fulgidus (strain ATCC 49558 / DSM 4304 / JCM 9628 / NBRC 100126 / VC-16)).